We begin with the raw amino-acid sequence, 408 residues long: Multidrug resistance protein MdtG (408 aa).

A run of 10 helical transmembrane segments spans residues 16–36 (LIVAWLGCFLTGAAFSLVMPF), 58–78 (IVFSITFLFSAIASPFWGGLA), 92–112 (LGMGIVMVLMGLAQNIWQFLI), 115–135 (ALLGLLGGFVPNANALIATQV), 146–166 (TLSTGGVSGALLGPMAGGLLA), 173–193 (PVFFITASVLILCFFVTLFCI), 221–241 (ILSLFVTTLIIQVATGSIAPI), 256–276 (VAFISGMIASVPGVAALLSAP), 290–310 (ILITALIFSVLLLIPMSYVQT), and 378–398 (AVFLVTAGVVLFNAVYSWNSL).

This sequence belongs to the major facilitator superfamily. DHA1 family. MdtG (TC 2.A.1.2.20) subfamily.

It is found in the cell inner membrane. Its function is as follows. Confers resistance to fosfomycin and deoxycholate. The chain is Multidrug resistance protein MdtG from Escherichia coli (strain SMS-3-5 / SECEC).